We begin with the raw amino-acid sequence, 254 residues long: GTP cyclohydrolase 1 type 2 homolog (254 aa).

The a divalent metal cation site is built by His-68, His-69, Asp-106, His-222, and Glu-226.

It belongs to the GTP cyclohydrolase I type 2/NIF3 family. Homohexamer.

The sequence is that of GTP cyclohydrolase 1 type 2 homolog from Allochromatium vinosum (strain ATCC 17899 / DSM 180 / NBRC 103801 / NCIMB 10441 / D) (Chromatium vinosum).